The primary structure comprises 369 residues: 3-dehydroquinate synthase (369 aa).

Residues aspartate 78–lysine 83, glycine 112–aspartate 116, threonine 136–threonine 137, lysine 149, lysine 158, and threonine 176–threonine 179 each bind NAD(+). Glutamate 191, histidine 254, and histidine 271 together coordinate Zn(2+).

It belongs to the sugar phosphate cyclases superfamily. Dehydroquinate synthase family. It depends on NAD(+) as a cofactor. The cofactor is Co(2+). Zn(2+) serves as cofactor.

It is found in the cytoplasm. The enzyme catalyses 7-phospho-2-dehydro-3-deoxy-D-arabino-heptonate = 3-dehydroquinate + phosphate. The protein operates within metabolic intermediate biosynthesis; chorismate biosynthesis; chorismate from D-erythrose 4-phosphate and phosphoenolpyruvate: step 2/7. Catalyzes the conversion of 3-deoxy-D-arabino-heptulosonate 7-phosphate (DAHP) to dehydroquinate (DHQ). This chain is 3-dehydroquinate synthase, found in Nitrosomonas europaea (strain ATCC 19718 / CIP 103999 / KCTC 2705 / NBRC 14298).